The following is a 317-amino-acid chain: DNA-directed RNA polymerase subunit alpha (317 aa).

Residues 1–234 (MKQFVRPEFI…AHLEFFIDLN (234 aa)) form an alpha N-terminal domain (alpha-NTD) region. Residues 250 to 317 (DKELDRTVEE…ASLGLAFRQS (68 aa)) form an alpha C-terminal domain (alpha-CTD) region.

It belongs to the RNA polymerase alpha chain family. In terms of assembly, homodimer. The RNAP catalytic core consists of 2 alpha, 1 beta, 1 beta' and 1 omega subunit. When a sigma factor is associated with the core the holoenzyme is formed, which can initiate transcription.

The enzyme catalyses RNA(n) + a ribonucleoside 5'-triphosphate = RNA(n+1) + diphosphate. DNA-dependent RNA polymerase catalyzes the transcription of DNA into RNA using the four ribonucleoside triphosphates as substrates. The chain is DNA-directed RNA polymerase subunit alpha from Mycoplasma mycoides subsp. mycoides SC (strain CCUG 32753 / NCTC 10114 / PG1).